A 139-amino-acid chain; its full sequence is Class I hydrophobin 1 (139 aa).

An N-terminal signal peptide occupies residues 1–21; sequence MFFRISTVFVVALAAFAAASP. 4 disulfide bridges follow: cysteine 57–cysteine 118, cysteine 64–cysteine 112, cysteine 65–cysteine 98, and cysteine 119–cysteine 132.

This sequence belongs to the fungal hydrophobin family. As to quaternary structure, self-assembles to form functional amyloid fibrils called rodlets. Self-assembly into fibrillar rodlets occurs spontaneously at hydrophobic:hydrophilic interfaces and the rodlets further associate laterally to form amphipathic monolayers.

The protein resides in the secreted. It localises to the cell wall. Functionally, aerial growth, conidiation, and dispersal of filamentous fungi in the environment rely upon a capability of their secreting small amphipathic proteins called hydrophobins (HPBs) with low sequence identity. Class I can self-assemble into an outermost layer of rodlet bundles on aerial cell surfaces, conferring cellular hydrophobicity that supports fungal growth, development and dispersal; whereas Class II form highly ordered films at water-air interfaces through intermolecular interactions but contribute nothing to the rodlet structure. Hah1 is a class I hydrophobin that is involved in aerial growth of mycelia, but does not play a role in pathogenesis. This Heterobasidion annosum (Root rot fungus) protein is Class I hydrophobin 1.